The sequence spans 640 residues: Phosphomethylpyrimidine synthase (640 aa).

Substrate is bound by residues N235, M264, Y293, H329, 349-351, 390-393, and E429; these read SRG and DGLR. H433 contributes to the Zn(2+) binding site. Position 456 (Y456) interacts with substrate. Residue H497 coordinates Zn(2+). Residues C577, C580, and C585 each coordinate [4Fe-4S] cluster.

It belongs to the ThiC family. As to quaternary structure, homodimer. It depends on [4Fe-4S] cluster as a cofactor.

The catalysed reaction is 5-amino-1-(5-phospho-beta-D-ribosyl)imidazole + S-adenosyl-L-methionine = 4-amino-2-methyl-5-(phosphooxymethyl)pyrimidine + CO + 5'-deoxyadenosine + formate + L-methionine + 3 H(+). It functions in the pathway cofactor biosynthesis; thiamine diphosphate biosynthesis. Catalyzes the synthesis of the hydroxymethylpyrimidine phosphate (HMP-P) moiety of thiamine from aminoimidazole ribotide (AIR) in a radical S-adenosyl-L-methionine (SAM)-dependent reaction. The chain is Phosphomethylpyrimidine synthase from Photobacterium profundum (strain SS9).